Here is a 25-residue protein sequence, read N- to C-terminus: Hemocyanin subunit 3 (25 aa).

Belongs to the tyrosinase family. Hemocyanin subfamily. As to expression, hemolymph.

It is found in the secreted. It localises to the extracellular space. In terms of biological role, hemocyanins are copper-containing oxygen carriers occurring freely dissolved in the hemolymph of many mollusks and arthropods. This chain is Hemocyanin subunit 3, found in Maja squinado (Mediterranean spider crab).